The following is a 480-amino-acid chain: Cysteine--tRNA ligase (480 aa).

Cysteine 29 is a binding site for Zn(2+). A 'HIGH' region motif is present at residues 31–41; that stretch reads PTVYADPHLGH. Cysteine 220, histidine 245, and glutamate 249 together coordinate Zn(2+). The short motif at 276 to 280 is the 'KMSKS' region element; it reads KMAKS. Lysine 279 contacts ATP.

It belongs to the class-I aminoacyl-tRNA synthetase family. As to quaternary structure, monomer. Requires Zn(2+) as cofactor.

The protein localises to the cytoplasm. The enzyme catalyses tRNA(Cys) + L-cysteine + ATP = L-cysteinyl-tRNA(Cys) + AMP + diphosphate. The sequence is that of Cysteine--tRNA ligase from Thermus thermophilus (strain ATCC 27634 / DSM 579 / HB8).